A 151-amino-acid chain; its full sequence is Large ribosomal subunit protein uL15 (151 aa).

Positions 37–57 (GMRGQKSRSGRPTRPGFEGGQ) are disordered.

Belongs to the universal ribosomal protein uL15 family. In terms of assembly, part of the 50S ribosomal subunit.

Functionally, binds to the 23S rRNA. The protein is Large ribosomal subunit protein uL15 of Prochlorococcus marinus (strain MIT 9313).